The following is a 443-amino-acid chain: Thymidine phosphorylase (443 aa).

It belongs to the thymidine/pyrimidine-nucleoside phosphorylase family. Homodimer.

It catalyses the reaction thymidine + phosphate = 2-deoxy-alpha-D-ribose 1-phosphate + thymine. Its pathway is pyrimidine metabolism; dTMP biosynthesis via salvage pathway; dTMP from thymine: step 1/2. Functionally, the enzymes which catalyze the reversible phosphorolysis of pyrimidine nucleosides are involved in the degradation of these compounds and in their utilization as carbon and energy sources, or in the rescue of pyrimidine bases for nucleotide synthesis. The polypeptide is Thymidine phosphorylase (Shewanella putrefaciens (strain CN-32 / ATCC BAA-453)).